We begin with the raw amino-acid sequence, 340 residues long: Glycerol-3-phosphate dehydrogenase [NAD(P)+] (340 aa).

S14, F15, R35, and K109 together coordinate NADPH. Residues K109 and G137 each coordinate sn-glycerol 3-phosphate. A141 is a binding site for NADPH. Sn-glycerol 3-phosphate-binding residues include K192, D245, S255, R256, and N257. Catalysis depends on K192, which acts as the Proton acceptor. R256 contacts NADPH. NADPH contacts are provided by V280 and E282.

The protein belongs to the NAD-dependent glycerol-3-phosphate dehydrogenase family.

Its subcellular location is the cytoplasm. The enzyme catalyses sn-glycerol 3-phosphate + NAD(+) = dihydroxyacetone phosphate + NADH + H(+). The catalysed reaction is sn-glycerol 3-phosphate + NADP(+) = dihydroxyacetone phosphate + NADPH + H(+). It participates in membrane lipid metabolism; glycerophospholipid metabolism. Catalyzes the reduction of the glycolytic intermediate dihydroxyacetone phosphate (DHAP) to sn-glycerol 3-phosphate (G3P), the key precursor for phospholipid synthesis. This Teredinibacter turnerae (strain ATCC 39867 / T7901) protein is Glycerol-3-phosphate dehydrogenase [NAD(P)+].